The primary structure comprises 154 residues: UPF0178 protein YaiI (154 aa).

The protein belongs to the UPF0178 family.

The protein is UPF0178 protein YaiI of Escherichia coli (strain ATCC 8739 / DSM 1576 / NBRC 3972 / NCIMB 8545 / WDCM 00012 / Crooks).